Reading from the N-terminus, the 817-residue chain is Lon protease 1 (817 aa).

One can recognise a Lon N-terminal domain in the interval 18–216; that stretch reads VPLLPLRDII…KLYELMQGEI (199 aa). Residue 368–375 participates in ATP binding; the sequence is GPPGVGKT. Positions 604-785 constitute a Lon proteolytic domain; that stretch reads EDQVGIVTGL…DDVLREALVL (182 aa). Residues Ser691 and Lys734 contribute to the active site. Residues 789 to 817 are disordered; the sequence is EEFGRKPTTDGGKLGGTTELPASPAVAPA.

The protein belongs to the peptidase S16 family. As to quaternary structure, homohexamer. Organized in a ring with a central cavity.

It localises to the cytoplasm. It carries out the reaction Hydrolysis of proteins in presence of ATP.. Its function is as follows. ATP-dependent serine protease that mediates the selective degradation of mutant and abnormal proteins as well as certain short-lived regulatory proteins. Required for cellular homeostasis and for survival from DNA damage and developmental changes induced by stress. Degrades polypeptides processively to yield small peptide fragments that are 5 to 10 amino acids long. Binds to DNA in a double-stranded, site-specific manner. This is Lon protease 1 from Myxococcus xanthus.